The sequence spans 956 residues: Isoleucine--tRNA ligase (956 aa).

Positions 60–70 (PYANGHIHVGH) match the 'HIGH' region motif. L-isoleucyl-5'-AMP is bound at residue Glu-583. Positions 624-628 (KMSKS) match the 'KMSKS' region motif. Lys-627 is a binding site for ATP. 4 residues coordinate Zn(2+): Cys-921, Cys-924, Cys-938, and Cys-941.

Belongs to the class-I aminoacyl-tRNA synthetase family. IleS type 1 subfamily. Monomer. It depends on Zn(2+) as a cofactor.

It is found in the cytoplasm. The catalysed reaction is tRNA(Ile) + L-isoleucine + ATP = L-isoleucyl-tRNA(Ile) + AMP + diphosphate. In terms of biological role, catalyzes the attachment of isoleucine to tRNA(Ile). As IleRS can inadvertently accommodate and process structurally similar amino acids such as valine, to avoid such errors it has two additional distinct tRNA(Ile)-dependent editing activities. One activity is designated as 'pretransfer' editing and involves the hydrolysis of activated Val-AMP. The other activity is designated 'posttransfer' editing and involves deacylation of mischarged Val-tRNA(Ile). The polypeptide is Isoleucine--tRNA ligase (Aquifex aeolicus (strain VF5)).